The primary structure comprises 404 residues: Multidrug resistance protein MdtG (404 aa).

11 helical membrane-spanning segments follow: residues 19–39 (LGCF…PLYV), 56–76 (LVFS…GGLA), 90–110 (LGMA…QFLI), 113–133 (ALLG…ATQV), 144–164 (TLST…GLLA), 171–191 (PVFF…FFFI), 222–242 (LFVT…ILTL), 254–274 (IAFI…LSAP), 288–308 (ILIV…FVQT), 317–337 (FLLG…LVYN), and 376–396 (AVFC…WNSL).

This sequence belongs to the major facilitator superfamily. DHA1 family. MdtG (TC 2.A.1.2.20) subfamily.

It localises to the cell inner membrane. This Salmonella heidelberg (strain SL476) protein is Multidrug resistance protein MdtG.